The chain runs to 78 residues: MICOS complex subunit MIC10 (78 aa).

S2 carries the N-acetylserine modification. A helical membrane pass occupies residues 17–36 (AVVKIGTGFGLGIVFSLTFF). The Mitochondrial intermembrane portion of the chain corresponds to 37 to 78 (KRRMWPLAFGSGMGLGMAYSNCQHDFQAPYLLHGKYVKEQEQ).

The protein belongs to the MICOS complex subunit Mic10 family. Component of the mitochondrial contact site and cristae organizing system (MICOS) complex, composed of at least MICOS10/MIC10, CHCHD3/MIC19, CHCHD6/MIC25, APOOL/MIC27, IMMT/MIC60, APOO/MIC23/MIC26 and MICOS13/MIC13. This complex was also known under the names MINOS or MitOS complex. The MICOS complex associates with mitochondrial outer membrane proteins SAMM50, MTX1 and MTX2 (together described as components of the mitochondrial outer membrane sorting assembly machinery (SAM) complex) and DNAJC11, mitochondrial inner membrane protein TMEM11 and with HSPA9. The MICOS and SAM complexes together with DNAJC11 are part of a large protein complex spanning both membranes termed the mitochondrial intermembrane space bridging (MIB) complex. Interacts with IMMT/MIC60 and MICOS13/MIC13. Interacts with APOO/MIC23/MIC26 and APOOL/MIC27. Interacts with ARMC1.

It localises to the mitochondrion inner membrane. Functionally, component of the MICOS complex, a large protein complex of the mitochondrial inner membrane that plays crucial roles in the maintenance of crista junctions, inner membrane architecture, and formation of contact sites to the outer membrane. The sequence is that of MICOS complex subunit MIC10 from Homo sapiens (Human).